Here is a 329-residue protein sequence, read N- to C-terminus: Cytoplasmic phosphatidylinositol transfer protein 1 (329 aa).

Residues 267–329 (SHGGYSSAPS…GNKPSLAKPE (63 aa)) are disordered.

This sequence belongs to the PtdIns transfer protein family. PI transfer class IIB subfamily.

The protein resides in the cytoplasm. The enzyme catalyses a 1,2-diacyl-sn-glycero-3-phospho-(1D-myo-inositol)(in) = a 1,2-diacyl-sn-glycero-3-phospho-(1D-myo-inositol)(out). It catalyses the reaction a 1,2-diacyl-sn-glycero-3-phosphate(in) = a 1,2-diacyl-sn-glycero-3-phosphate(out). Catalyzes the transfer of phosphatidylinositol (PI) and phosphatidic acid (PA) between membranes. Binds PA derived from the phospholipase D signaling pathway and among the cellular PA species, preferably binds to the C16:0/16:1 and C16:1/18:1 PA species. In Xenopus tropicalis (Western clawed frog), this protein is Cytoplasmic phosphatidylinositol transfer protein 1 (pitpnc1).